We begin with the raw amino-acid sequence, 396 residues long: NADH-quinone oxidoreductase subunit D (396 aa).

It belongs to the complex I 49 kDa subunit family. As to quaternary structure, NDH-1 is composed of 14 different subunits. Subunits NuoB, C, D, E, F, and G constitute the peripheral sector of the complex.

The protein resides in the cell inner membrane. The catalysed reaction is a quinone + NADH + 5 H(+)(in) = a quinol + NAD(+) + 4 H(+)(out). In terms of biological role, NDH-1 shuttles electrons from NADH, via FMN and iron-sulfur (Fe-S) centers, to quinones in the respiratory chain. The immediate electron acceptor for the enzyme in this species is believed to be ubiquinone. Couples the redox reaction to proton translocation (for every two electrons transferred, four hydrogen ions are translocated across the cytoplasmic membrane), and thus conserves the redox energy in a proton gradient. The polypeptide is NADH-quinone oxidoreductase subunit D (Brucella anthropi (strain ATCC 49188 / DSM 6882 / CCUG 24695 / JCM 21032 / LMG 3331 / NBRC 15819 / NCTC 12168 / Alc 37) (Ochrobactrum anthropi)).